A 348-amino-acid chain; its full sequence is Phospho-N-acetylmuramoyl-pentapeptide-transferase (348 aa).

The next 10 helical transmembrane spans lie at 11–31 (SWML…IFLG), 68–88 (AGGI…LPLG), 92–112 (TWLF…DDII), 128–148 (FVIQ…IYKG), 165–185 (VGHS…TIVG), 196–216 (LDGL…VVAL), 222–242 (PLAQ…FAFL), 251–271 (VFMG…CAVM), 276–296 (LLLI…ILQV), and 326–346 (VVAR…IAAL).

The protein belongs to the glycosyltransferase 4 family. MraY subfamily. Requires Mg(2+) as cofactor.

Its subcellular location is the cell inner membrane. It carries out the reaction UDP-N-acetyl-alpha-D-muramoyl-L-alanyl-gamma-D-glutamyl-meso-2,6-diaminopimeloyl-D-alanyl-D-alanine + di-trans,octa-cis-undecaprenyl phosphate = di-trans,octa-cis-undecaprenyl diphospho-N-acetyl-alpha-D-muramoyl-L-alanyl-D-glutamyl-meso-2,6-diaminopimeloyl-D-alanyl-D-alanine + UMP. It participates in cell wall biogenesis; peptidoglycan biosynthesis. Catalyzes the initial step of the lipid cycle reactions in the biosynthesis of the cell wall peptidoglycan: transfers peptidoglycan precursor phospho-MurNAc-pentapeptide from UDP-MurNAc-pentapeptide onto the lipid carrier undecaprenyl phosphate, yielding undecaprenyl-pyrophosphoryl-MurNAc-pentapeptide, known as lipid I. The sequence is that of Phospho-N-acetylmuramoyl-pentapeptide-transferase from Chlamydia caviae (strain ATCC VR-813 / DSM 19441 / 03DC25 / GPIC) (Chlamydophila caviae).